Consider the following 143-residue polypeptide: Putative pre-16S rRNA nuclease (143 aa).

Belongs to the YqgF nuclease family.

It localises to the cytoplasm. Functionally, could be a nuclease involved in processing of the 5'-end of pre-16S rRNA. This is Putative pre-16S rRNA nuclease from Mycoplasma capricolum subsp. capricolum (strain California kid / ATCC 27343 / NCTC 10154).